Here is a 331-residue protein sequence, read N- to C-terminus: Terpene synthase 8 (331 aa).

A DDxx(x)D/E motif motif is present at residues 97–102 (DDFYLE). An NDxxSxxxD/E motif motif is present at residues 228–236 (NDIYSFNKE).

This sequence belongs to the terpene synthase family.

In terms of biological role, terpene synthase that converts its substrate farnesyl diphosphate (FPP) into several yet unidentified sesquiterpenes. The protein is Terpene synthase 8 of Dictyostelium purpureum (Slime mold).